The following is a 452-amino-acid chain: Serine--tRNA ligase (452 aa).

An L-serine-binding site is contributed by T251 to E253. R282–E284 serves as a coordination point for ATP. An L-serine-binding site is contributed by E305. E369–S372 provides a ligand contact to ATP. S404 serves as a coordination point for L-serine.

The protein belongs to the class-II aminoacyl-tRNA synthetase family. Type-1 seryl-tRNA synthetase subfamily. As to quaternary structure, homodimer. The tRNA molecule binds across the dimer.

It localises to the cytoplasm. The enzyme catalyses tRNA(Ser) + L-serine + ATP = L-seryl-tRNA(Ser) + AMP + diphosphate + H(+). It catalyses the reaction tRNA(Sec) + L-serine + ATP = L-seryl-tRNA(Sec) + AMP + diphosphate + H(+). Its pathway is aminoacyl-tRNA biosynthesis; selenocysteinyl-tRNA(Sec) biosynthesis; L-seryl-tRNA(Sec) from L-serine and tRNA(Sec): step 1/1. In terms of biological role, catalyzes the attachment of serine to tRNA(Ser). Is also able to aminoacylate tRNA(Sec) with serine, to form the misacylated tRNA L-seryl-tRNA(Sec), which will be further converted into selenocysteinyl-tRNA(Sec). In Albidiferax ferrireducens (strain ATCC BAA-621 / DSM 15236 / T118) (Rhodoferax ferrireducens), this protein is Serine--tRNA ligase.